Here is a 169-residue protein sequence, read N- to C-terminus: Peptide methionine sulfoxide reductase MsrA (169 aa).

Residue Cys10 is part of the active site.

Belongs to the MsrA Met sulfoxide reductase family.

It catalyses the reaction L-methionyl-[protein] + [thioredoxin]-disulfide + H2O = L-methionyl-(S)-S-oxide-[protein] + [thioredoxin]-dithiol. The catalysed reaction is [thioredoxin]-disulfide + L-methionine + H2O = L-methionine (S)-S-oxide + [thioredoxin]-dithiol. Has an important function as a repair enzyme for proteins that have been inactivated by oxidation. Catalyzes the reversible oxidation-reduction of methionine sulfoxide in proteins to methionine. The polypeptide is Peptide methionine sulfoxide reductase MsrA (Streptococcus agalactiae serotype Ia (strain ATCC 27591 / A909 / CDC SS700)).